The primary structure comprises 405 residues: 5-azacytidine-induced protein 2 (405 aa).

The homodimerization stretch occupies residues 1 to 198 (MDTLVEDDIC…TELQKARQTG (198 aa)). Residues 40 to 197 (ALVTAYEDIK…RTELQKARQT (158 aa)) are a coiled coil. The segment at 229–270 (SDNMQHAYWELKREMSNLHLVTQVQAELLRKLKTSAAVKKAC) is interaction with TBK1 and IKBKE. Residues serine 331 and serine 366 each carry the phosphoserine modification. The interval 357 to 377 (LEDNSWVFPSPPKSSETAFGE) is disordered.

Homodimer. Interacts with IKBKE and TBK1. Interacts with TICAM1. Interacts with TAX1BP1. Interacts with CALCOCO2. In terms of processing, ubiquitinated via 'Lys-48'-linked polyubiquitination by TRIM38, leading to its degradation. In terms of tissue distribution, testis, ovary, heart, lung, kidney and brain. Expressed mainly in the spermatocytes or spermatids in the testis.

The protein resides in the cytoplasm. In terms of biological role, adapter protein which binds TBK1 and IKBKE playing a role in antiviral innate immunity. Activates serine/threonine-protein kinase TBK1 and facilitates its oligomerization. Enhances the phosphorylation of NF-kappa-B p65 subunit RELA by TBK1. Promotes TBK1-induced as well as TNF-alpha or PMA-induced activation of NF-kappa-B. Participates in IFNB promoter activation via TICAM1. The polypeptide is 5-azacytidine-induced protein 2 (Azi2) (Mus musculus (Mouse)).